Here is a 196-residue protein sequence, read N- to C-terminus: UPF0301 protein BF2109 (196 aa).

It belongs to the UPF0301 (AlgH) family.

The protein is UPF0301 protein BF2109 of Bacteroides fragilis (strain ATCC 25285 / DSM 2151 / CCUG 4856 / JCM 11019 / LMG 10263 / NCTC 9343 / Onslow / VPI 2553 / EN-2).